The chain runs to 246 residues: UPF0736 protein Aflv_2136 (246 aa).

This sequence belongs to the UPF0736 family.

In Anoxybacillus flavithermus (strain DSM 21510 / WK1), this protein is UPF0736 protein Aflv_2136.